A 37-amino-acid chain; its full sequence is Cytochrome b6-f complex subunit 7 (37 aa).

Residues 5–25 traverse the membrane as a helical segment; that stretch reads IFGTAFLFIVLVPVGLALGAF.

It belongs to the PetM family. The 4 large subunits of the cytochrome b6-f complex are cytochrome b6, subunit IV (17 kDa polypeptide, PetD), cytochrome f and the Rieske protein, while the 4 small subunits are PetG, PetL, PetM and PetN. The complex functions as a dimer.

It is found in the cellular thylakoid membrane. In terms of biological role, component of the cytochrome b6-f complex, which mediates electron transfer between photosystem II (PSII) and photosystem I (PSI), cyclic electron flow around PSI, and state transitions. This chain is Cytochrome b6-f complex subunit 7, found in Synechococcus elongatus (strain ATCC 33912 / PCC 7942 / FACHB-805) (Anacystis nidulans R2).